A 530-amino-acid chain; its full sequence is MRQRQLFSVFLLLLAFVSFQKLCYCDDQTVLYESFDEPFDGRWIVSKNSDYEGVWKHAKSEGHEDYGLLVSEKARKYGIVKELDEPLNLKEGTVVLQYEVRFQEGLECGGAYLKYLRPQEAGWTPQGFDSESPYSIMFGPDKCGGTNKVHFILKHKNPKSGEYVEHHLKFPPSVPYDKLSHVYTAILKPDNEVRILVDGEEKKKANLLSGEDFEPALIPAKTIPDPEDKKPEDWDERAKIPDPNAVKPEDWDEDAPMEIEDEEAEKPEGWLDDEPEEVDDPEATKPEDWDDEEDGMWEAPKIDNPKCEAAPGCGEWKRPMKRNPAYKGKWSSPLIDNPAYKGIWKPRDIPNPDYFELDRPDYEPIAAIGIEIWTMQDGILFDNILIAKDEKVAETYRQTTWKPKFDVEKEKQKAEEEAAGSADGLKSYQKVVFDLLNKVADLSFLSAYKSKITELIEKAEQQPNLTIGVLVAIVVVFFSLFLKLIFGGKKAAAPVEKKKPEVAESSKSGDEAEKKEETAAPRKRQPRRDN.

The first 20 residues, 1 to 20, serve as a signal peptide directing secretion; it reads MRQRQLFSVFLLLLAFVSFQ. At 21–466 the chain is on the lumenal side; the sequence is KLCYCDDQTV…EKAEQQPNLT (446 aa). Ca(2+)-binding residues include Ser34 and Asp65. Cys108 and Cys143 are oxidised to a cystine. Residues Tyr112, Lys114, Tyr134, and Asp141 each coordinate an alpha-D-glucoside. Residues 216–315 form a disordered region; that stretch reads ALIPAKTIPD…KCEAAPGCGE (100 aa). The interval 223–356 is p domain (Extended arm); sequence IPDPEDKKPE…RDIPNPDYFE (134 aa). Over residues 224–240 the composition is skewed to basic and acidic residues; sequence PDPEDKKPEDWDERAKI. 5 consecutive repeat copies span residues 225 to 236, 242 to 253, 261 to 272, 280 to 291, and 295 to 305. 2 4 X approximate repeats regions span residues 225–291 and 295–352; these read DPED…DWDD and GMWE…IPNP. Acidic residues predominate over residues 250–281; the sequence is DWDEDAPMEIEDEEAEKPEGWLDDEPEEVDDP. A disulfide bridge connects residues Cys307 and Cys313. Repeat copies occupy residues 314-324, 328-338, and 342-352. Position 371 (Glu371) interacts with an alpha-D-glucoside. A Ca(2+)-binding site is contributed by Asp382. A glycan (N-linked (GlcNAc...) asparagine) is linked at Asn464. Residues 467–487 traverse the membrane as a helical segment; that stretch reads IGVLVAIVVVFFSLFLKLIFG. Residues 488–530 are Cytoplasmic-facing; that stretch reads GKKAAAPVEKKKPEVAESSKSGDEAEKKEETAAPRKRQPRRDN. The segment at 490 to 530 is disordered; the sequence is KAAAPVEKKKPEVAESSKSGDEAEKKEETAAPRKRQPRRDN. Over residues 495–520 the composition is skewed to basic and acidic residues; it reads VEKKKPEVAESSKSGDEAEKKEETAA. Ser508 is subject to Phosphoserine. Residues 521-530 show a composition bias toward basic residues; that stretch reads PRKRQPRRDN.

It belongs to the calreticulin family.

Its subcellular location is the endoplasmic reticulum membrane. Functionally, calcium-binding protein that interacts with newly synthesized monoglucosylated glycoproteins in the endoplasmic reticulum. It may act in assisting protein assembly and/or in the retention within the ER of unassembled protein subunits. It seems to play a major role in the quality control apparatus of the ER by the retention of incorrectly folded proteins. This is Calnexin homolog 1 (CNX1) from Arabidopsis thaliana (Mouse-ear cress).